Reading from the N-terminus, the 342-residue chain is S-adenosylmethionine:tRNA ribosyltransferase-isomerase (342 aa).

The protein belongs to the QueA family. Monomer.

The protein resides in the cytoplasm. It carries out the reaction 7-aminomethyl-7-carbaguanosine(34) in tRNA + S-adenosyl-L-methionine = epoxyqueuosine(34) in tRNA + adenine + L-methionine + 2 H(+). Its pathway is tRNA modification; tRNA-queuosine biosynthesis. Transfers and isomerizes the ribose moiety from AdoMet to the 7-aminomethyl group of 7-deazaguanine (preQ1-tRNA) to give epoxyqueuosine (oQ-tRNA). The sequence is that of S-adenosylmethionine:tRNA ribosyltransferase-isomerase from Streptococcus pyogenes serotype M49 (strain NZ131).